A 183-amino-acid polypeptide reads, in one-letter code: ATP synthase subunit delta (183 aa).

This sequence belongs to the ATPase delta chain family. F-type ATPases have 2 components, F(1) - the catalytic core - and F(0) - the membrane proton channel. F(1) has five subunits: alpha(3), beta(3), gamma(1), delta(1), epsilon(1). F(0) has three main subunits: a(1), b(2) and c(10-14). The alpha and beta chains form an alternating ring which encloses part of the gamma chain. F(1) is attached to F(0) by a central stalk formed by the gamma and epsilon chains, while a peripheral stalk is formed by the delta and b chains.

It localises to the cell inner membrane. Functionally, f(1)F(0) ATP synthase produces ATP from ADP in the presence of a proton or sodium gradient. F-type ATPases consist of two structural domains, F(1) containing the extramembraneous catalytic core and F(0) containing the membrane proton channel, linked together by a central stalk and a peripheral stalk. During catalysis, ATP synthesis in the catalytic domain of F(1) is coupled via a rotary mechanism of the central stalk subunits to proton translocation. Its function is as follows. This protein is part of the stalk that links CF(0) to CF(1). It either transmits conformational changes from CF(0) to CF(1) or is implicated in proton conduction. This Chloroherpeton thalassium (strain ATCC 35110 / GB-78) protein is ATP synthase subunit delta.